The chain runs to 172 residues: Lipoprotein signal peptidase (172 aa).

The next 4 helical transmembrane spans lie at 12 to 32 (TSAA…VILF), 43 to 63 (VFAY…LVYN), 77 to 97 (WQRW…CYLL), and 102 to 122 (GQKM…GNVI). Residues D132 and D150 contribute to the active site. A helical membrane pass occupies residues 142 to 162 (HWPAFNLADSAITVGAVLLVL).

The protein belongs to the peptidase A8 family.

The protein localises to the cell inner membrane. It catalyses the reaction Release of signal peptides from bacterial membrane prolipoproteins. Hydrolyzes -Xaa-Yaa-Zaa-|-(S,diacylglyceryl)Cys-, in which Xaa is hydrophobic (preferably Leu), and Yaa (Ala or Ser) and Zaa (Gly or Ala) have small, neutral side chains.. It functions in the pathway protein modification; lipoprotein biosynthesis (signal peptide cleavage). In terms of biological role, this protein specifically catalyzes the removal of signal peptides from prolipoproteins. This is Lipoprotein signal peptidase from Paraburkholderia phytofirmans (strain DSM 17436 / LMG 22146 / PsJN) (Burkholderia phytofirmans).